The following is a 358-amino-acid chain: Peptide chain release factor 1 (358 aa).

Gln233 carries the N5-methylglutamine modification.

Belongs to the prokaryotic/mitochondrial release factor family. Post-translationally, methylated by PrmC. Methylation increases the termination efficiency of RF1.

The protein localises to the cytoplasm. In terms of biological role, peptide chain release factor 1 directs the termination of translation in response to the peptide chain termination codons UAG and UAA. The sequence is that of Peptide chain release factor 1 from Lysinibacillus sphaericus (strain C3-41).